A 280-amino-acid polypeptide reads, in one-letter code: MNDRSSRRRTMKDDETFEISIPFDEAPHLDPQIFYSLSPSRRNFEEPPEAASSALALMNSVKTQLHMALERNSWLQKRIEDLEEERDFLRCQLDKFISSARMEAEDHCRMKPGPRRMEGDSRGGAGGEASDPESAASSLSGASEEGSASERRRQKQKGGASRRRFGKPKARERQRVKDADGVLCRYKKILGTFQKLKSMSRAFEHHRVDRNTVALTTPIAELLIVAPEKLAEVGEFDPSKERLLEYSRRCFLALDDETLKKVQALKKSKLLLPITYRFKR.

A coiled-coil region spans residues 63 to 101 (TQLHMALERNSWLQKRIEDLEEERDFLRCQLDKFISSAR). Residues 103–121 (EAEDHCRMKPGPRRMEGDS) are compositionally biased toward basic and acidic residues. Residues 103-176 (EAEDHCRMKP…KPKARERQRV (74 aa)) form a disordered region. The residue at position 130 (S130) is a Phosphoserine. The segment covering 133 to 146 (ESAASSLSGASEEG) has biased composition (low complexity). The short motif at 151 to 164 (RRRQKQKGGASRRR) is the Bipartite nuclear localization signal element. The segment covering 152 to 168 (RRQKQKGGASRRRFGKP) has biased composition (basic residues).

As to quaternary structure, interacts with p53/TP53.

It localises to the nucleus. Functionally, promotes the degradation of p53/TP53 protein and inhibits its transactivity. This chain is Coiled-coil domain-containing protein 106 (CCDC106), found in Homo sapiens (Human).